Here is a 132-residue protein sequence, read N- to C-terminus: Large ribosomal subunit protein uL14 (132 aa).

The protein belongs to the universal ribosomal protein uL14 family. Part of the 50S ribosomal subunit. Forms a cluster with proteins L3 and L24e, part of which may contact the 16S rRNA in 2 intersubunit bridges.

Binds to 23S rRNA. Forms part of two intersubunit bridges in the 70S ribosome. This Methanosarcina mazei (strain ATCC BAA-159 / DSM 3647 / Goe1 / Go1 / JCM 11833 / OCM 88) (Methanosarcina frisia) protein is Large ribosomal subunit protein uL14.